Reading from the N-terminus, the 673-residue chain is MAPFLRISFNSYELGSLQAEDDASQPFCAVKMKEALTTDRGKTLVQKKPTMYPEWKSTFDAHIYEGRVIQIVLMRAAEDPMSEVTVGVSVLAERCKKNNGKAEFWLDLQPQAKVLMCVQYFLEDGDCKQSMRSEEEAMFPTMNRRGAIKQAKIHYIKNHEFIATFFGQPTFCSVCKEFVWGLNKQGYKCRQCNAAIHKKCIDKIIGRCTGTATNSRDTIFQKERFNIDMPHRFKVYNYMSPTFCDHCGTLLWGLVKQGLKCEDCGMNVHHKCREKVANLCGINQKLLAEALNQVTQKASRKPETPETVGIYQGFEKKTAVSGNDIPDNNGTYGKIWEGSNRCRLENFTFQKVLGKGSFGKVLLAELKGKERYFAIKYLKKDVVLIDDDVECTMVEKRVLALAWENPFLTHLICTFQTKDHLFFVMEFLNGGDLMFHIQDKGRFELYRATFYAAEIICGLQFLHGKGIIYRDLKLDNVMLDKDGHIKIADFGMCKENIFGENRASTFCGTPDYIAPEILQGLKYSFSVDWWSFGVLLYEMLIGQSPFHGDDEDELFESIRVDTPHYPRWITKESKDIMEKLFERDPAKRLGVTGNIRLHPFFKTINWNLLEKRKVEPPFKPKVKSPSDYSNFDPEFLNEKPQLSFSDKNLIDSMDQTAFKGFSFVNPKYEQFLE.

In terms of domain architecture, C2 spans 1 to 106 (MAPFLRISFN…KNNGKAEFWL (106 aa)). Phosphothreonine is present on residues Thr-43 and Thr-50. Position 64 is a phosphotyrosine (Tyr-64). Position 130 is a phosphoserine (Ser-130). Thr-141 is subject to Phosphothreonine. Tyr-155 bears the Phosphotyrosine mark. The Phorbol-ester/DAG-type 1 zinc finger occupies 158 to 208 (NHEFIATFFGQPTFCSVCKEFVWGLNKQGYKCRQCNAAIHKKCIDKIIGRC). The residue at position 218 (Thr-218) is a Phosphothreonine. The segment at 230-280 (PHRFKVYNYMSPTFCDHCGTLLWGLVKQGLKCEDCGMNVHHKCREKVANLC) adopts a Phorbol-ester/DAG-type 2 zinc-finger fold. Ser-299 bears the Phosphoserine; by autocatalysis mark. 2 positions are modified to phosphotyrosine; by SRC: Tyr-311 and Tyr-332. The 255-residue stretch at 347–601 (FTFQKVLGKG…TGNIRLHPFF (255 aa)) folds into the Protein kinase domain. 353–361 (LGKGSFGKV) contacts ATP. The residue at position 372 (Tyr-372) is a Phosphotyrosine. Lys-376 serves as a coordination point for ATP. Position 449 is a phosphothreonine (Thr-449). Residue Asp-471 is the Proton acceptor of the active site. Phosphoserine is present on Ser-504. Thr-505 is modified (phosphothreonine; by autocatalysis). A Phosphotyrosine modification is found at Tyr-565. Positions 602–673 (KTINWNLLEK…VNPKYEQFLE (72 aa)) constitute an AGC-kinase C-terminal domain. Residues Ser-643, Ser-652, and Ser-662 each carry the phosphoserine modification.

It belongs to the protein kinase superfamily. AGC Ser/Thr protein kinase family. PKC subfamily. As to quaternary structure, interacts with PDPK1 (via N-terminal region). Interacts with RAD9A. Interacts with CDCP1. Interacts with MUC1. Interacts with VASP. Interacts with CAVIN3. Interacts with PRKD2 (via N-terminus and zing-finger domain 1 and 2) in response to oxidative stress; the interaction is independent of PRKD2 tyrosine phosphorylation. Interacts with PLSC3; interaction is enhanced by UV irradiation. Post-translationally, autophosphorylated and/or phosphorylated at Thr-505, within the activation loop; phosphorylation at Thr-505 is not a prerequisite for enzymatic activity. Autophosphorylated at Ser-299. Upon TNFSF10/TRAIL treatment, phosphorylated at Tyr-155; phosphorylation is required for its translocation to the endoplasmic reticulum and cleavage by caspase-3. Phosphorylated at Tyr-311, Tyr-332 and Tyr-565; phosphorylation of Tyr-311 and Tyr-565 following thrombin or zymosan stimulation potentiates its kinase activity. Phosphorylated by protein kinase PDPK1; phosphorylation is inhibited by the apoptotic C-terminal cleavage product of PKN2. Phosphorylated at Tyr-311 and Tyr-332 by SRC; phosphorylation leads to enhanced autophosphorylation at Thr-505. Phosphorylated at Tyr-311 through a SYK and SRC mechanism downstream of C-type lectin receptors activation, promoting its activation. Proteolytically cleaved into a catalytic subunit and a regulatory subunit by caspase-3 during apoptosis which results in kinase activation.

It localises to the cytoplasm. Its subcellular location is the nucleus. It is found in the perinuclear region. The protein localises to the cell membrane. The protein resides in the mitochondrion. It localises to the endomembrane system. It carries out the reaction L-seryl-[protein] + ATP = O-phospho-L-seryl-[protein] + ADP + H(+). The enzyme catalyses L-threonyl-[protein] + ATP = O-phospho-L-threonyl-[protein] + ADP + H(+). The catalysed reaction is L-tyrosyl-[protein] + ATP = O-phospho-L-tyrosyl-[protein] + ADP + H(+). Its activity is regulated as follows. Novel PKCs (PRKCD, PRKCE, PRKCH and PRKCQ) are calcium-insensitive, but activated by diacylglycerol (DAG) and phosphatidylserine. Three specific sites; Thr-505 (activation loop of the kinase domain), Ser-643 (turn motif) and Ser-662 (hydrophobic region), need to be phosphorylated for its full activation. Activated by caspase-3 (CASP3) cleavage during apoptosis. After cleavage, the pseudosubstrate motif in the regulatory subunit is released from the substrate recognition site of the catalytic subunit, which enables PRKCD to become constitutively activated. The catalytic subunit which displays properties of a sphingosine-dependent protein kinase is activated by D-erythro-sphingosine (Sph) or N,N-dimethyl-D-erythrosphingosine (DMS) or N,N,N-trimethyl-D-erythrosphingosine (TMS), but not by ceramide or Sph-1-P and is strongly inhibited by phosphatidylserine. Calcium-independent, phospholipid- and diacylglycerol (DAG)-dependent serine/threonine-protein kinase that plays contrasting roles in cell death and cell survival by functioning as a pro-apoptotic protein during DNA damage-induced apoptosis, but acting as an anti-apoptotic protein during cytokine receptor-initiated cell death, is involved in tumor suppression, is required for oxygen radical production by NADPH oxidase and acts as a positive or negative regulator in platelet functional responses. Upon DNA damage, activates the promoter of the death-promoting transcription factor BCLAF1/Btf to trigger BCLAF1-mediated p53/TP53 gene transcription and apoptosis. In response to oxidative stress, interact with and activate CHUK/IKKA in the nucleus, causing the phosphorylation of p53/TP53. In the case of ER stress or DNA damage-induced apoptosis, can form a complex with the tyrosine-protein kinase ABL1 which trigger apoptosis independently of p53/TP53. In cytosol can trigger apoptosis by activating MAPK11 or MAPK14, inhibiting AKT1 and decreasing the level of X-linked inhibitor of apoptosis protein (XIAP), whereas in nucleus induces apoptosis via the activation of MAPK8 or MAPK9. Upon ionizing radiation treatment, is required for the activation of the apoptosis regulators BAX and BAK, which trigger the mitochondrial cell death pathway. Can phosphorylate MCL1 and target it for degradation which is sufficient to trigger for BAX activation and apoptosis. Is required for the control of cell cycle progression both at G1/S and G2/M phases. Mediates phorbol 12-myristate 13-acetate (PMA)-induced inhibition of cell cycle progression at G1/S phase by up-regulating the CDK inhibitor CDKN1A/p21 and inhibiting the cyclin CCNA2 promoter activity. In response to UV irradiation can phosphorylate CDK1, which is important for the G2/M DNA damage checkpoint activation. Can protect glioma cells from the apoptosis induced by TNFSF10/TRAIL, probably by inducing increased phosphorylation and subsequent activation of AKT1. Can also act as tumor suppressor upon mitogenic stimulation with PMA or TPA. In N-formyl-methionyl-leucyl-phenylalanine (fMLP)-treated cells, is required for NCF1 (p47-phox) phosphorylation and activation of NADPH oxidase activity, and regulates TNF-elicited superoxide anion production in neutrophils, by direct phosphorylation and activation of NCF1 or indirectly through MAPK1/3 (ERK1/2) signaling pathways. Involved in antifungal immunity by mediating phosphorylation and activation of CARD9 downstream of C-type lectin receptors activation, promoting interaction between CARD9 and BCL10, followed by activation of NF-kappa-B and MAP kinase p38 pathways. May also play a role in the regulation of NADPH oxidase activity in eosinophil after stimulation with IL5, leukotriene B4 or PMA. In collagen-induced platelet aggregation, acts a negative regulator of filopodia formation and actin polymerization by interacting with and negatively regulating VASP phosphorylation. Downstream of PAR1, PAR4 and CD36/GP4 receptors, regulates differentially platelet dense granule secretion; acts as a positive regulator in PAR-mediated granule secretion, whereas it negatively regulates CD36/GP4-mediated granule release. Phosphorylates MUC1 in the C-terminal and regulates the interaction between MUC1 and beta-catenin. The catalytic subunit phosphorylates 14-3-3 proteins (YWHAB, YWHAZ and YWHAH) in a sphingosine-dependent fashion. Phosphorylates ELAVL1 in response to angiotensin-2 treatment. Phosphorylates mitochondrial phospholipid scramblase 3 (PLSCR3), resulting in increased cardiolipin expression on the mitochondrial outer membrane which facilitates apoptosis. Phosphorylates SMPD1 which induces SMPD1 secretion. Its function is as follows. Truncated isoform 2 is inactive. This chain is Protein kinase C delta type, found in Rattus norvegicus (Rat).